The sequence spans 127 residues: Small ribosomal subunit protein bS6 (127 aa).

The disordered stretch occupies residues 99 to 127 (PSPMMKEEKSKSMMPGDAAPAAPAETAAA). Positions 110 to 127 (SMMPGDAAPAAPAETAAA) are enriched in low complexity.

Belongs to the bacterial ribosomal protein bS6 family.

Binds together with bS18 to 16S ribosomal RNA. The polypeptide is Small ribosomal subunit protein bS6 (Dechloromonas aromatica (strain RCB)).